The primary structure comprises 216 residues: Sarcospan (216 aa).

Residues 1–26 (MGRKPSPRAQELPEEEARTCCGCRFP) lie on the Cytoplasmic side of the membrane. A helical transmembrane segment spans residues 27 to 47 (LLLALLQLALGIAVTVLGFLM). Over 48–59 (ASISPSLLVRDT) the chain is Extracellular. A helical membrane pass occupies residues 60 to 80 (PFWAGSIVCVVAYLGLFMLCV). At 81–95 (SYQVDERTCVQFSMK) the chain is on the cytoplasmic side. A helical membrane pass occupies residues 96 to 116 (VFYFLLSALGLMVCMLAVAFA). Residues 117–166 (AHHYSLLAQFTCETSLDSCQCKLPSSEPLSRAFVYRDVTDCTSVTGTFKL) are Extracellular-facing. A helical transmembrane segment spans residues 167–187 (FLIIQMVLNLVCGLVCLLACF). Residues 188 to 216 (VMWKHRYQVFYVGVGLRSLMASDGQLPKA) are Cytoplasmic-facing.

Its subcellular location is the cell membrane. It localises to the sarcolemma. The protein resides in the postsynaptic cell membrane. Its function is as follows. Component of the dystrophin-glycoprotein complex (DGC), a complex that spans the muscle plasma membrane and forms a link between the F-actin cytoskeleton and the extracellular matrix. Preferentially associates with the sarcoglycan subcomplex of the DGC. The sequence is that of Sarcospan (Sspn) from Mus musculus (Mouse).